The following is a 609-amino-acid chain: Sulfite reductase [NADPH] flavoprotein alpha-component (609 aa).

The Flavodoxin-like domain maps to 72–210 (ITLISASQTG…LAAQWRRQLV (139 aa)). FMN is bound by residues 78–83 (SQTGNA) and 125–128 (STQG). An FAD-binding FR-type domain is found at 244–458 (SSPLQATFAV…IEHNDNFRLP (215 aa)). Residues threonine 332, glutamine 366, 396–399 (RLYS), 414–416 (TVG), tyrosine 420, and 429–432 (GGAS) each bind FAD. NADP(+) contacts are provided by residues 529 to 530 (SR), 535 to 539 (KIYVQ), and aspartate 571. An FAD-binding site is contributed by tyrosine 609.

This sequence belongs to the NADPH-dependent sulphite reductase flavoprotein subunit CysJ family. In the N-terminal section; belongs to the flavodoxin family. It in the C-terminal section; belongs to the flavoprotein pyridine nucleotide cytochrome reductase family. Alpha(8)-beta(8). The alpha component is a flavoprotein, the beta component is a hemoprotein. FAD serves as cofactor. Requires FMN as cofactor.

The enzyme catalyses hydrogen sulfide + 3 NADP(+) + 3 H2O = sulfite + 3 NADPH + 4 H(+). The protein operates within sulfur metabolism; hydrogen sulfide biosynthesis; hydrogen sulfide from sulfite (NADPH route): step 1/1. Its function is as follows. Component of the sulfite reductase complex that catalyzes the 6-electron reduction of sulfite to sulfide. This is one of several activities required for the biosynthesis of L-cysteine from sulfate. The flavoprotein component catalyzes the electron flow from NADPH -&gt; FAD -&gt; FMN to the hemoprotein component. This is Sulfite reductase [NADPH] flavoprotein alpha-component from Pectobacterium atrosepticum (strain SCRI 1043 / ATCC BAA-672) (Erwinia carotovora subsp. atroseptica).